The primary structure comprises 309 residues: Probable manganese-dependent inorganic pyrophosphatase (309 aa).

6 residues coordinate Mn(2+): H9, D13, D15, D75, H97, and D149.

This sequence belongs to the PPase class C family. Mn(2+) is required as a cofactor.

Its subcellular location is the cytoplasm. It carries out the reaction diphosphate + H2O = 2 phosphate + H(+). The sequence is that of Probable manganese-dependent inorganic pyrophosphatase from Bacillus licheniformis (strain ATCC 14580 / DSM 13 / JCM 2505 / CCUG 7422 / NBRC 12200 / NCIMB 9375 / NCTC 10341 / NRRL NRS-1264 / Gibson 46).